The chain runs to 61 residues: uncharacterized protein (61 aa).

Residues 1-20 lie on the Extracellular side of the membrane; sequence MSSTTSTINLSSLGSAINDV. Residues 21 to 41 traverse the membrane as a helical segment; sequence LNIIVQYLPVFVTVAVLFGII. Topologically, residues 42–61 are cytoplasmic; that stretch reads TYMTGGLGGLFSGITGIFGS.

It localises to the host membrane. This is an uncharacterized protein from Acidianus filamentous virus 2 (isolate Italy/Pozzuoli) (AFV-2).